A 50-amino-acid chain; its full sequence is MNIHTYHHLLFPSLVFHQSSDVPNALSLHIHTYEYIIVVIDPFRITLAFR.

Regulatory peptide encoded by the primary transcript (pri-miR319a) of the microRNA miR319a that enhances the accumulation of its corresponding mature miRNA. Acts probably as a transcriptional activator of its corresponding pri-miRNA. The chain is Peptide encoded by miPEP319a from Arabidopsis thaliana (Mouse-ear cress).